The primary structure comprises 251 residues: Octanoyltransferase (251 aa).

The BPL/LPL catalytic domain maps to Ala-56–Asp-241. Residues Arg-96–His-103, Ala-168–Gly-170, and Gly-181–Ser-183 contribute to the substrate site. Catalysis depends on Cys-199, which acts as the Acyl-thioester intermediate.

It belongs to the LipB family.

Its subcellular location is the cytoplasm. It carries out the reaction octanoyl-[ACP] + L-lysyl-[protein] = N(6)-octanoyl-L-lysyl-[protein] + holo-[ACP] + H(+). Its pathway is protein modification; protein lipoylation via endogenous pathway; protein N(6)-(lipoyl)lysine from octanoyl-[acyl-carrier-protein]: step 1/2. Functionally, catalyzes the transfer of endogenously produced octanoic acid from octanoyl-acyl-carrier-protein onto the lipoyl domains of lipoate-dependent enzymes. Lipoyl-ACP can also act as a substrate although octanoyl-ACP is likely to be the physiological substrate. This Burkholderia cenocepacia (strain HI2424) protein is Octanoyltransferase.